The primary structure comprises 73 residues: Cell division protein ZapB (73 aa).

The stretch at 3 to 67 forms a coiled coil; it reads LELLSKLETK…WNDKVTGLVG (65 aa).

The protein belongs to the ZapB family. In terms of assembly, homodimer. The ends of the coiled-coil dimer bind to each other, forming polymers. Interacts with FtsZ.

The protein localises to the cytoplasm. Its function is as follows. Non-essential, abundant cell division factor that is required for proper Z-ring formation. It is recruited early to the divisome by direct interaction with FtsZ, stimulating Z-ring assembly and thereby promoting cell division earlier in the cell cycle. Its recruitment to the Z-ring requires functional FtsA or ZipA. The sequence is that of Cell division protein ZapB from Shewanella sp. (strain ANA-3).